Reading from the N-terminus, the 98-residue chain is Aspartyl/glutamyl-tRNA(Asn/Gln) amidotransferase subunit C (98 aa).

Positions alanine 75–aspartate 98 are disordered.

The protein belongs to the GatC family. Heterotrimer of A, B and C subunits.

The enzyme catalyses L-glutamyl-tRNA(Gln) + L-glutamine + ATP + H2O = L-glutaminyl-tRNA(Gln) + L-glutamate + ADP + phosphate + H(+). The catalysed reaction is L-aspartyl-tRNA(Asn) + L-glutamine + ATP + H2O = L-asparaginyl-tRNA(Asn) + L-glutamate + ADP + phosphate + 2 H(+). Allows the formation of correctly charged Asn-tRNA(Asn) or Gln-tRNA(Gln) through the transamidation of misacylated Asp-tRNA(Asn) or Glu-tRNA(Gln) in organisms which lack either or both of asparaginyl-tRNA or glutaminyl-tRNA synthetases. The reaction takes place in the presence of glutamine and ATP through an activated phospho-Asp-tRNA(Asn) or phospho-Glu-tRNA(Gln). This Streptomyces griseus subsp. griseus (strain JCM 4626 / CBS 651.72 / NBRC 13350 / KCC S-0626 / ISP 5235) protein is Aspartyl/glutamyl-tRNA(Asn/Gln) amidotransferase subunit C.